The primary structure comprises 460 residues: Cysteine--tRNA ligase (460 aa).

Residue C28 participates in Zn(2+) binding. The 'HIGH' region signature appears at 30-40 (MTVYDYCHLGH). Positions 209, 234, and 238 each coordinate Zn(2+). The 'KMSKS' region signature appears at 266 to 270 (KMSKS). K269 is a binding site for ATP.

This sequence belongs to the class-I aminoacyl-tRNA synthetase family. As to quaternary structure, monomer. Requires Zn(2+) as cofactor.

It localises to the cytoplasm. It carries out the reaction tRNA(Cys) + L-cysteine + ATP = L-cysteinyl-tRNA(Cys) + AMP + diphosphate. This chain is Cysteine--tRNA ligase, found in Thioalkalivibrio sulfidiphilus (strain HL-EbGR7).